The primary structure comprises 526 residues: Na(+)/H(+) antiporter NhaB (526 aa).

Helical transmembrane passes span 25-45 (ILLFLLINPIAFYLDPFIAGW), 52-72 (IFTLAMALKCYPLQPGGLLAI), 89-109 (LVANIEVLLLLVFMVAGIYFM), 130-164 (LSLAFCLVSAFLSAFLDALTVIAVVISVATGFYAI), 204-224 (LMMHAAIGTALGGVCTLVGEP), 242-262 (IRMSPVTVPVFICGLLTCVLV), 307-327 (IALWLILGLAMHLAAVGLIGL), 350-370 (QEALPFTALLAVFFSVVAVII), 391-411 (LALFYLANGLLSMVSDNVFVG), 448-468 (VATPNGQAAFLFMLTSALAPL), 479-499 (MALPYTLVLGLVGFFSVEMLL), and 505-525 (WFYQAGWLVLDNVAPAALPVL).

This sequence belongs to the NhaB Na(+)/H(+) (TC 2.A.34) antiporter family.

Its subcellular location is the cell inner membrane. It catalyses the reaction 2 Na(+)(in) + 3 H(+)(out) = 2 Na(+)(out) + 3 H(+)(in). Functionally, na(+)/H(+) antiporter that extrudes sodium in exchange for external protons. The polypeptide is Na(+)/H(+) antiporter NhaB (Aeromonas hydrophila subsp. hydrophila (strain ATCC 7966 / DSM 30187 / BCRC 13018 / CCUG 14551 / JCM 1027 / KCTC 2358 / NCIMB 9240 / NCTC 8049)).